The chain runs to 64 residues: uncharacterized protein (64 aa).

This is an uncharacterized protein from Sulfolobus islandicus rod-shaped virus 1 (SIRV-1).